The chain runs to 152 residues: MAACHRILLLLSVAVASGAAQKPPLTKRGLLEFGGIITCSTGRSPLSYVMYGCYCGLGGKGWPRDKADCCHEHDCCYGEAETLGCQTKTDQYRWKCEDKKVECDDLNDKCEKFLCKCDRDAAKCLEKAPYNQKYLFWPSFMCGSEEPKCSIY.

Residues Met-1 to Ala-20 form the signal peptide. 8 disulfide bridges follow: Cys-39–Cys-96, Cys-53–Cys-142, Cys-55–Cys-70, Cys-69–Cys-124, Cys-75–Cys-149, Cys-76–Cys-117, Cys-85–Cys-110, and Cys-103–Cys-115. Ca(2+)-binding residues include Gly-56 and Gly-58. Residue His-73 is part of the active site. Asp-74 is a binding site for Ca(2+). Residue Asp-118 is part of the active site.

The protein belongs to the phospholipase A2 family. In terms of tissue distribution, expressed by the venom gland. Heavily expressed in the venom gland transcriptome.

The protein localises to the secreted. It carries out the reaction a 1,2-diacyl-sn-glycero-3-phosphocholine + H2O = a 1-acyl-sn-glycero-3-phosphocholine + a fatty acid + H(+). PA2 catalyzes the calcium-dependent hydrolysis of the 2-acyl groups in 3-sn-phosphoglycerides. The polypeptide is Phospholipase A2 (Meiacanthus atrodorsalis (Forktail blenny)).